The primary structure comprises 1096 residues: Protein transport protein SEC24 B (1096 aa).

Residues 1–315 (MAAPVPPGAY…SAPGTPGSIY (315 aa)) form a disordered region. The span at 12–23 (PNNNQQNSGGPP) shows a compositional bias: low complexity. The segment covering 27–45 (PGSQGNPNSLAANMQNLNI) has biased composition (polar residues). Positions 47 to 64 (RPPPPMPGSGPRPSPPFG) are enriched in pro residues. Low complexity predominate over residues 65 to 78 (QSPQSFPQQQQQQP). Over residues 79 to 92 (RPSPMARPGPPPPA) the composition is skewed to pro residues. Residues 93–107 (AMARPGGPPQVSQPG) are compositionally biased toward low complexity. Over residues 108 to 122 (GFPPVGRPVAPPSNQ) the composition is skewed to pro residues. Over residues 140-149 (SFPQPGGFPA) the composition is skewed to low complexity. Pro residues-rich tracts occupy residues 150–160 (SGPPGGVPSGP), 171–186 (SPPPMGPGMSMPPPSG), 246–258 (MAPPPPYGQPPNA), and 287–303 (GRPPMPGGFPYGAPPQQ). Zn(2+) is bound by residues cysteine 433, cysteine 436, cysteine 455, and cysteine 458. Positions 433–458 (CSRCKGYVNPFMKFIDQGRKFICNLC) are zinc finger-like.

It belongs to the SEC23/SEC24 family. SEC24 subfamily. As to quaternary structure, component of the coat protein complex II (COPII), composed of at least five proteins: the Sec23/24 complex, the Sec13/31 complex and Sar1. Mainly expressed in pollen, roots, stems, petioles and hypocotyls, and, to a lower extent, in leaves and cotyledons.

Its subcellular location is the cytoplasmic vesicle. It is found in the COPII-coated vesicle membrane. It localises to the endoplasmic reticulum membrane. The protein localises to the golgi apparatus membrane. Its function is as follows. Component of the coat protein complex II (COPII), that covers ER-derived vesicles involved in transport from the endoplasmic reticulum to the Golgi apparatus. COPII is composed of at least five proteins: the SEC23/24 complex, the SEC13/31 complex, and the protein SAR1. Acts in the cytoplasm to promote the transport of secretory, plasma membrane, and vacuolar proteins from the endoplasmic reticulum to the Golgi complex. This Arabidopsis thaliana (Mouse-ear cress) protein is Protein transport protein SEC24 B.